Reading from the N-terminus, the 384-residue chain is MAAQNGNASFPANFSIPQEHASSLPFNFSYDDYDLPLDEDEDMTKTQTFFAAKIVIGVALVGIMLTCGIGNFVFITALTRYKKLRNLTNLLIANLAISDFLVAIICCPFEMDYYVVHQLSWEHGHVLCACINYLRTVSLYVSTNALLAIAIDRYLAIVHPLKPRMNYQTASFLIALVWMVSILISIPSAYFTKETVLFIVKNQKKIFCGQVWPVDQQLYYKSYFLFVFGIEFLGPVFTMTLCYARISRELWFKAVPGFQTEQIRKRLRCRRKTVLVLMCILTAYVLCWAPFYGFTIVRDFFPTVFVKEKHYLTAFYVVECIAMSNSMINTVCFVTVKNSTMKYFKKMLLLHWRPSHHGSKSSADLDLKTSRLPATEEVDCIRLK.

Topologically, residues methionine 1–lysine 53 are extracellular. N-linked (GlcNAc...) asparagine glycosylation is found at asparagine 7, asparagine 13, and asparagine 27. The chain crosses the membrane as a helical span at residues isoleucine 54–phenylalanine 74. Residues isoleucine 75–asparagine 89 lie on the Cytoplasmic side of the membrane. Residues leucine 90–glutamate 110 traverse the membrane as a helical segment. Topologically, residues methionine 111–valine 137 are extracellular. An intrachain disulfide couples cysteine 128 to cysteine 208. Residues serine 138 to valine 158 traverse the membrane as a helical segment. At histidine 159–serine 171 the chain is on the cytoplasmic side. The helical transmembrane segment at phenylalanine 172–threonine 192 threads the bilayer. Over lysine 193–tyrosine 223 the chain is Extracellular. The chain crosses the membrane as a helical span at residues phenylalanine 224 to alanine 244. The Cytoplasmic segment spans residues arginine 245 to threonine 273. Residues valine 274 to phenylalanine 294 form a helical membrane-spanning segment. Residues threonine 295 to threonine 313 are Extracellular-facing. A helical transmembrane segment spans residues alanine 314–valine 334. Topologically, residues threonine 335–lysine 384 are cytoplasmic.

Belongs to the G-protein coupled receptor 1 family. In terms of assembly, homodimer.

It is found in the cell membrane. Its function is as follows. Receptor for prokineticin 2. Exclusively coupled to the G(q) subclass of heteromeric G proteins. Activation leads to mobilization of calcium, stimulation of phosphoinositide turnover and activation of p44/p42 mitogen-activated protein kinase. This Bos taurus (Bovine) protein is Prokineticin receptor 2 (PROKR2).